The sequence spans 625 residues: 1-deoxy-D-xylulose-5-phosphate synthase (625 aa).

Thiamine diphosphate-binding positions include His-74 and 115-117 (GHS). Residue Asp-146 coordinates Mg(2+). Residues 147–148 (GA), Asn-175, Tyr-286, and Glu-367 each bind thiamine diphosphate. Asn-175 serves as a coordination point for Mg(2+).

This sequence belongs to the transketolase family. DXPS subfamily. Homodimer. Mg(2+) is required as a cofactor. Requires thiamine diphosphate as cofactor.

The catalysed reaction is D-glyceraldehyde 3-phosphate + pyruvate + H(+) = 1-deoxy-D-xylulose 5-phosphate + CO2. Its pathway is metabolic intermediate biosynthesis; 1-deoxy-D-xylulose 5-phosphate biosynthesis; 1-deoxy-D-xylulose 5-phosphate from D-glyceraldehyde 3-phosphate and pyruvate: step 1/1. In terms of biological role, catalyzes the acyloin condensation reaction between C atoms 2 and 3 of pyruvate and glyceraldehyde 3-phosphate to yield 1-deoxy-D-xylulose-5-phosphate (DXP). The polypeptide is 1-deoxy-D-xylulose-5-phosphate synthase (Lachnoclostridium phytofermentans (strain ATCC 700394 / DSM 18823 / ISDg) (Clostridium phytofermentans)).